The primary structure comprises 61 residues: UPF0391 membrane protein Aave_0978 (61 aa).

The next 2 membrane-spanning stretches (helical) occupy residues 5–25 (AIIFAIISLIAGALGFSGVAA) and 33–53 (ILFFLFLVVAVIFIVLAVLGV).

It belongs to the UPF0391 family.

Its subcellular location is the cell membrane. This is UPF0391 membrane protein Aave_0978 from Paracidovorax citrulli (strain AAC00-1) (Acidovorax citrulli).